The primary structure comprises 199 residues: NADH-quinone oxidoreductase subunit C (199 aa).

This sequence belongs to the complex I 30 kDa subunit family. NDH-1 is composed of 14 different subunits. Subunits NuoB, C, D, E, F, and G constitute the peripheral sector of the complex.

Its subcellular location is the cell inner membrane. It catalyses the reaction a quinone + NADH + 5 H(+)(in) = a quinol + NAD(+) + 4 H(+)(out). Its function is as follows. NDH-1 shuttles electrons from NADH, via FMN and iron-sulfur (Fe-S) centers, to quinones in the respiratory chain. The immediate electron acceptor for the enzyme in this species is believed to be ubiquinone. Couples the redox reaction to proton translocation (for every two electrons transferred, four hydrogen ions are translocated across the cytoplasmic membrane), and thus conserves the redox energy in a proton gradient. In Paramagnetospirillum magneticum (strain ATCC 700264 / AMB-1) (Magnetospirillum magneticum), this protein is NADH-quinone oxidoreductase subunit C.